The following is a 650-amino-acid chain: 1-deoxy-D-xylulose-5-phosphate synthase (650 aa).

Residues 1–13 (MSKIKNDKRETGH) show a composition bias toward basic and acidic residues. Positions 1–23 (MSKIKNDKRETGHLKSPPETPLL) are disordered. Thiamine diphosphate contacts are provided by residues His-92 and 133–135 (AHS). Asp-164 contacts Mg(2+). Thiamine diphosphate-binding positions include 165–166 (GA), Asn-193, Tyr-302, and Glu-384. Asn-193 is a binding site for Mg(2+).

This sequence belongs to the transketolase family. DXPS subfamily. As to quaternary structure, homodimer. Requires Mg(2+) as cofactor. Thiamine diphosphate is required as a cofactor.

The catalysed reaction is D-glyceraldehyde 3-phosphate + pyruvate + H(+) = 1-deoxy-D-xylulose 5-phosphate + CO2. The protein operates within metabolic intermediate biosynthesis; 1-deoxy-D-xylulose 5-phosphate biosynthesis; 1-deoxy-D-xylulose 5-phosphate from D-glyceraldehyde 3-phosphate and pyruvate: step 1/1. In terms of biological role, catalyzes the acyloin condensation reaction between C atoms 2 and 3 of pyruvate and glyceraldehyde 3-phosphate to yield 1-deoxy-D-xylulose-5-phosphate (DXP). This chain is 1-deoxy-D-xylulose-5-phosphate synthase, found in Chelativorans sp. (strain BNC1).